Reading from the N-terminus, the 425-residue chain is Kynureninase (425 aa).

Pyridoxal 5'-phosphate contacts are provided by residues leucine 105, threonine 106, 133-136 (FPSD), aspartate 218, histidine 221, and tyrosine 243. Lysine 244 is subject to N6-(pyridoxal phosphate)lysine. Tryptophan 274 and asparagine 302 together coordinate pyridoxal 5'-phosphate.

This sequence belongs to the kynureninase family. In terms of assembly, homodimer. Pyridoxal 5'-phosphate serves as cofactor.

The catalysed reaction is L-kynurenine + H2O = anthranilate + L-alanine + H(+). It catalyses the reaction 3-hydroxy-L-kynurenine + H2O = 3-hydroxyanthranilate + L-alanine + H(+). Its pathway is amino-acid degradation; L-kynurenine degradation; L-alanine and anthranilate from L-kynurenine: step 1/1. The protein operates within cofactor biosynthesis; NAD(+) biosynthesis; quinolinate from L-kynurenine: step 2/3. In terms of biological role, catalyzes the cleavage of L-kynurenine (L-Kyn) and L-3-hydroxykynurenine (L-3OHKyn) into anthranilic acid (AA) and 3-hydroxyanthranilic acid (3-OHAA), respectively. The polypeptide is Kynureninase (Flavobacterium johnsoniae (strain ATCC 17061 / DSM 2064 / JCM 8514 / BCRC 14874 / CCUG 350202 / NBRC 14942 / NCIMB 11054 / UW101) (Cytophaga johnsonae)).